The primary structure comprises 493 residues: Glutamyl-tRNA(Gln) amidotransferase subunit A (493 aa).

Residues lysine 78 and serine 158 each act as charge relay system in the active site. The active-site Acyl-ester intermediate is serine 182.

It belongs to the amidase family. GatA subfamily. Heterotrimer of A, B and C subunits.

It catalyses the reaction L-glutamyl-tRNA(Gln) + L-glutamine + ATP + H2O = L-glutaminyl-tRNA(Gln) + L-glutamate + ADP + phosphate + H(+). Its function is as follows. Allows the formation of correctly charged Gln-tRNA(Gln) through the transamidation of misacylated Glu-tRNA(Gln) in organisms which lack glutaminyl-tRNA synthetase. The reaction takes place in the presence of glutamine and ATP through an activated gamma-phospho-Glu-tRNA(Gln). The chain is Glutamyl-tRNA(Gln) amidotransferase subunit A from Methylorubrum populi (strain ATCC BAA-705 / NCIMB 13946 / BJ001) (Methylobacterium populi).